Here is an 821-residue protein sequence, read N- to C-terminus: Glycerol-3-phosphate acyltransferase (821 aa).

Positions 310 to 315 match the HXXXXD motif motif; the sequence is CHRSHM.

The protein belongs to the GPAT/DAPAT family.

It localises to the cell membrane. It carries out the reaction sn-glycerol 3-phosphate + an acyl-CoA = a 1-acyl-sn-glycero-3-phosphate + CoA. It functions in the pathway phospholipid metabolism; CDP-diacylglycerol biosynthesis; CDP-diacylglycerol from sn-glycerol 3-phosphate: step 1/3. The chain is Glycerol-3-phosphate acyltransferase from Baumannia cicadellinicola subsp. Homalodisca coagulata.